A 244-amino-acid polypeptide reads, in one-letter code: Protein crossbronx (244 aa).

Residues 20-176 form the UBC core domain; sequence QQEYKILAEY…VQENIKESKE (157 aa). A disordered region spans residues 209–244; it reads AGRSKQTEPSAQQGNGGHATGLSWVKEGEFKPLSIE.

Belongs to the ubiquitin-conjugating enzyme family. FTS subfamily.

This chain is Protein crossbronx (cbx), found in Drosophila simulans (Fruit fly).